A 202-amino-acid chain; its full sequence is ATP-dependent Clp protease proteolytic subunit 3 (202 aa).

S93 serves as the catalytic Nucleophile. H118 is an active-site residue.

This sequence belongs to the peptidase S14 family. As to quaternary structure, fourteen ClpP subunits assemble into 2 heptameric rings which stack back to back to give a disk-like structure with a central cavity, resembling the structure of eukaryotic proteasomes.

Its subcellular location is the cytoplasm. The catalysed reaction is Hydrolysis of proteins to small peptides in the presence of ATP and magnesium. alpha-casein is the usual test substrate. In the absence of ATP, only oligopeptides shorter than five residues are hydrolyzed (such as succinyl-Leu-Tyr-|-NHMec, and Leu-Tyr-Leu-|-Tyr-Trp, in which cleavage of the -Tyr-|-Leu- and -Tyr-|-Trp bonds also occurs).. In terms of biological role, cleaves peptides in various proteins in a process that requires ATP hydrolysis. Has a chymotrypsin-like activity. Plays a major role in the degradation of misfolded proteins. The chain is ATP-dependent Clp protease proteolytic subunit 3 from Rhodococcus jostii (strain RHA1).